Here is a 267-residue protein sequence, read N- to C-terminus: Stage 0 sporulation protein A (267 aa).

In terms of domain architecture, Response regulatory spans 5–123 (KVCVADDNRE…NLVGHIRQVS (119 aa)). Ca(2+) is bound by residues aspartate 10, aspartate 11, and aspartate 56. Aspartate 56 bears the 4-aspartylphosphate mark. The segment at 126-150 (ASSVTHRAPSSQSSIIRSSQPEPKK) is disordered. Over residues 135-145 (SSQSSIIRSSQ) the composition is skewed to low complexity. Positions 199–218 (PDIAKKFNTTASRVERAIRH) form a DNA-binding region, H-T-H motif.

In terms of assembly, interacts with small protein YqaH, which is encoded in the skin prophage-like element. Ca(2+) is required as a cofactor. Post-translationally, phosphorylated by KinA and KinB.

It localises to the cytoplasm. In terms of biological role, may play the central regulatory role in sporulation. It may be an element of the effector pathway responsible for the activation of sporulation genes in response to nutritional stress. Spo0A may act in concert with Spo0H (a sigma factor) to control the expression of some genes that are critical to the sporulation process. Repressor of abrB, activator of the spoIIa operon. Binds the DNA sequence 5'-TGNCGAA-3' (0A box). The sequence is that of Stage 0 sporulation protein A (spo0A) from Bacillus subtilis (strain 168).